We begin with the raw amino-acid sequence, 72 residues long: Translation initiation factor IF-1 (72 aa).

The region spanning 1–72 (MAKDDVIVVD…DKGRITHRYK (72 aa)) is the S1-like domain.

The protein belongs to the IF-1 family. As to quaternary structure, component of the 30S ribosomal translation pre-initiation complex which assembles on the 30S ribosome in the order IF-2 and IF-3, IF-1 and N-formylmethionyl-tRNA(fMet); mRNA recruitment can occur at any time during PIC assembly.

It is found in the cytoplasm. Functionally, one of the essential components for the initiation of protein synthesis. Stabilizes the binding of IF-2 and IF-3 on the 30S subunit to which N-formylmethionyl-tRNA(fMet) subsequently binds. Helps modulate mRNA selection, yielding the 30S pre-initiation complex (PIC). Upon addition of the 50S ribosomal subunit IF-1, IF-2 and IF-3 are released leaving the mature 70S translation initiation complex. In Aliarcobacter butzleri (strain RM4018) (Arcobacter butzleri), this protein is Translation initiation factor IF-1.